Reading from the N-terminus, the 750-residue chain is Glycerophosphodiester phosphodiesterase GDPDL7 (750 aa).

A signal peptide spans 1–17; that stretch reads MLRFIIFFSLFIHLCVA. GP-PDE domains follow at residues 41–339 and 355–654; these read PAVV…SQSI and ALVI…TRYL. N134, N304, N603, and N716 each carry an N-linked (GlcNAc...) asparagine glycan.

The protein belongs to the glycerophosphoryl diester phosphodiesterase family. As to expression, expressed in flowers and siliques.

It catalyses the reaction a sn-glycero-3-phosphodiester + H2O = an alcohol + sn-glycerol 3-phosphate + H(+). The sequence is that of Glycerophosphodiester phosphodiesterase GDPDL7 from Arabidopsis thaliana (Mouse-ear cress).